Reading from the N-terminus, the 462-residue chain is Trigger factor (462 aa).

A PPIase FKBP-type domain is found at 172–257 (GDKATIDFVG…LKALAAPGET (86 aa)). Residues 443-462 (LLAADEEDEEEAAESSAALV) form a disordered region. The segment covering 444-455 (LAADEEDEEEAA) has biased composition (acidic residues).

This sequence belongs to the FKBP-type PPIase family. Tig subfamily.

Its subcellular location is the cytoplasm. It carries out the reaction [protein]-peptidylproline (omega=180) = [protein]-peptidylproline (omega=0). Its function is as follows. Involved in protein export. Acts as a chaperone by maintaining the newly synthesized protein in an open conformation. Functions as a peptidyl-prolyl cis-trans isomerase. This is Trigger factor from Methylocella silvestris (strain DSM 15510 / CIP 108128 / LMG 27833 / NCIMB 13906 / BL2).